A 243-amino-acid chain; its full sequence is 3-deoxy-manno-octulosonate cytidylyltransferase (243 aa).

Belongs to the KdsB family.

It localises to the cytoplasm. It carries out the reaction 3-deoxy-alpha-D-manno-oct-2-ulosonate + CTP = CMP-3-deoxy-beta-D-manno-octulosonate + diphosphate. Its pathway is nucleotide-sugar biosynthesis; CMP-3-deoxy-D-manno-octulosonate biosynthesis; CMP-3-deoxy-D-manno-octulosonate from 3-deoxy-D-manno-octulosonate and CTP: step 1/1. It functions in the pathway bacterial outer membrane biogenesis; lipopolysaccharide biosynthesis. In terms of biological role, activates KDO (a required 8-carbon sugar) for incorporation into bacterial lipopolysaccharide in Gram-negative bacteria. This is 3-deoxy-manno-octulosonate cytidylyltransferase from Helicobacter pylori (strain J99 / ATCC 700824) (Campylobacter pylori J99).